The chain runs to 230 residues: Type II restriction enzyme MjaV (230 aa).

The enzyme catalyses Endonucleolytic cleavage of DNA to give specific double-stranded fragments with terminal 5'-phosphates.. A P subtype restriction enzyme that recognizes the double-stranded sequence 5'-GTAC-3'; the cleavage site is unknown. The sequence is that of Type II restriction enzyme MjaV (mjaVR) from Methanocaldococcus jannaschii (strain ATCC 43067 / DSM 2661 / JAL-1 / JCM 10045 / NBRC 100440) (Methanococcus jannaschii).